We begin with the raw amino-acid sequence, 140 residues long: MKILNCFSLIGQCAKPILRTYTSPAADLLKLPRVDIKEGKLRYLLLSVYIHGETKHARTVVRGWNTDSHDDIYYKNVRAMEKLGLCTKCLGGGKMDNDESARKIKIHGSCKTFGAANHHKTKEILLSSSKYKNFNITVKK.

Residue Arg-42 participates in substrate binding. Residue His-69 is the Proton acceptor of the active site. Cys-110 to Thr-112 contacts substrate.

The protein belongs to the janus family.

Its function is as follows. JanA and janB regulate somatic sex differentiation. In Drosophila pseudoobscura pseudoobscura (Fruit fly), this protein is Sex-regulated protein janus-B (janB).